The sequence spans 451 residues: Tubulin gamma-1 chain (451 aa).

S131 is subject to Phosphoserine; by BRSK1. Position 142–148 (142–148 (AGGTGSG)) interacts with GTP.

It belongs to the tubulin family. As to quaternary structure, component of the gamma-tubulin ring complex (gTuRC) consisting of TUBGCP2, TUBGCP3, TUBGCP4, TUBGCP5 and TUBGCP6 and gamma-tubulin TUBG1 or TUBG2. TUBGCP2, TUBGCP3, TUBGCP4, TUBGCP5 and TUBGCP6 assemble in a 5:5:2:1:1 stoichiometry; each is associated with a gamma-tubulin, thereby arranging 14 gamma-tubulins in a helical manner. Gamma-tubulin at the first position is blocked by TUBGCP3 at the last position, allowing 13 protafilaments to grow into a microtubule. The gTuRC (via TUBGCP3 and TUBGCP6) interacts with ACTB and MZT1; the interactions form a luminal bridge that stabilizes the initial structure during complex assembly. The gTuRC (via TUBGCP2) interacts with MZT2A/MZT2B and CDK5RAP2 (via CM1 motif); the interactions play a role in gTuRC activation. Interacts with alpha-beta tubulin heterodimers; the interaction allows microtubules to nucleate from the gTuRC. Interacts with B9D2. Interacts with CDK5RAP2; the interaction is leading to centrosomal localization of TUBG1 and CDK5RAP2. Interacts with CIMAP3. Interacts with SAS6 and NUP62 at the centrosome. Interacts with EML3 (phosphorylated at 'Thr-881') and HAUS8. Interacts with DNM2; this interaction may participate in centrosome cohesion. Interacts with CCDC66. Post-translationally, phosphorylation at Ser-131 by BRSK1 regulates centrosome duplication, possibly by mediating relocation of gamma-tubulin and its associated proteins from the cytoplasm to the centrosome.

It is found in the cytoplasm. The protein resides in the cytoskeleton. The protein localises to the microtubule organizing center. Its subcellular location is the centrosome. It localises to the spindle. In terms of biological role, tubulin is the major constituent of microtubules, protein filaments consisting of alpha- and beta-tubulin heterodimers. Gamma-tubulin is a key component of the gamma-tubulin ring complex (gTuRC) which mediates microtubule nucleation. The gTuRC regulates the minus-end nucleation of alpha-beta tubulin heterodimers that grow into microtubule protafilaments, a critical step in centrosome duplication and spindle formation. The protein is Tubulin gamma-1 chain of Bos taurus (Bovine).